The primary structure comprises 435 residues: 3-phosphoshikimate 1-carboxyvinyltransferase (435 aa).

3 residues coordinate 3-phosphoshikimate: lysine 23, serine 24, and arginine 28. Residue lysine 23 participates in phosphoenolpyruvate binding. Residues glycine 97 and arginine 125 each contribute to the phosphoenolpyruvate site. 3-phosphoshikimate contacts are provided by serine 170, serine 171, glutamine 172, serine 198, aspartate 314, asparagine 338, and lysine 342. Residue glutamine 172 coordinates phosphoenolpyruvate. The active-site Proton acceptor is the aspartate 314. Residues arginine 346, arginine 388, and lysine 413 each contribute to the phosphoenolpyruvate site.

This sequence belongs to the EPSP synthase family. As to quaternary structure, monomer.

The protein resides in the cytoplasm. The enzyme catalyses 3-phosphoshikimate + phosphoenolpyruvate = 5-O-(1-carboxyvinyl)-3-phosphoshikimate + phosphate. Its pathway is metabolic intermediate biosynthesis; chorismate biosynthesis; chorismate from D-erythrose 4-phosphate and phosphoenolpyruvate: step 6/7. In terms of biological role, catalyzes the transfer of the enolpyruvyl moiety of phosphoenolpyruvate (PEP) to the 5-hydroxyl of shikimate-3-phosphate (S3P) to produce enolpyruvyl shikimate-3-phosphate and inorganic phosphate. This is 3-phosphoshikimate 1-carboxyvinyltransferase from Sodalis glossinidius (strain morsitans).